The primary structure comprises 292 residues: RNA 5'-monophosphate methyltransferase (292 aa).

The disordered stretch occupies residues 1 to 21 (MAVPTELDGGSVKETAAEEES). Residues R46, N76, D110, 135-136 (DF), and M164 each bind S-adenosyl-L-methionine. The region spanning 53 to 274 (ELLRQLFPES…KQTIETHPIP (222 aa)) is the Bin3-type SAM domain.

It belongs to the methyltransferase superfamily. In terms of assembly, interacts with DICER1; the interaction may be mediated by RNA.

Its subcellular location is the cytoplasm. It catalyses the reaction a 5'-end 5'-phospho-ribonucleoside-RNA + S-adenosyl-L-methionine = a 5'-end (5'-methylphospho)-ribonucleoside-RNA + S-adenosyl-L-homocysteine. The enzyme catalyses a 5'-end 5'-phospho-ribonucleoside-RNA + 2 S-adenosyl-L-methionine = a 5'-end (5'-bismethylphospho)-ribonucleoside-RNA + 2 S-adenosyl-L-homocysteine. Functionally, O-methyltransferase that specifically monomethylates 5'-monophosphate of cytoplasmic histidyl tRNA (tRNA(His)), acting as a capping enzyme by protecting tRNA(His) from cleavage by DICER1. Also able, with less efficiently, to methylate the 5' monophosphate of a subset of pre-miRNAs, acting as a negative regulator of miRNA processing. The 5' monophosphate of pre-miRNAs is recognized by DICER1 and is required for pre-miRNAs processing: methylation at this position reduces the processing of pre-miRNAs by DICER1. Was also reported to mediate dimethylation of pre-miR-145; however dimethylation cannot be reproduced by another group which observes a monomethylation of pre-miR-145. In Homo sapiens (Human), this protein is RNA 5'-monophosphate methyltransferase.